Consider the following 543-residue polypeptide: Ipecac alkaloid beta-glucosidase 3 (543 aa).

Residues Q36, H140, 185–186 (NE), Y350, E422, W471, and F487 each bind a beta-D-glucoside. E186 acts as the Proton donor in catalysis. E422 (nucleophile) is an active-site residue.

Belongs to the glycosyl hydrolase 1 family.

It localises to the cytoplasm. It is found in the cytosol. The enzyme catalyses deacetylipecoside + H2O = deacetylipecoside aglycone + D-glucose. It catalyses the reaction deacetylisoipecoside + H2O = deacetylisoipecoside aglycone + D-glucose. The protein operates within alkaloid biosynthesis. In terms of biological role, beta-glucosidase catalyzing deglucosylation on N-deacetylisoipecoside and N-deacetylipecoside. The protein is Ipecac alkaloid beta-glucosidase 3 of Carapichea ipecacuanha (Ipecac).